The chain runs to 206 residues: Large ribosomal subunit protein mL62 (206 aa).

Residues Met-1–Ala-29 constitute a mitochondrion transit peptide. At Gln-90 the chain carries N5-methylglutamine.

Belongs to the prokaryotic/mitochondrial release factor family. Mitochondrion-specific ribosomal protein mL62 subfamily. Component of the mitochondrial ribosome large subunit (39S) which comprises a 16S rRNA and about 50 distinct proteins. Post-translationally, methylation of glutamine in the GGQ triplet by HEMK1.

It is found in the mitochondrion. It catalyses the reaction an N-acyl-L-alpha-aminoacyl-tRNA + H2O = an N-acyl-L-amino acid + a tRNA + H(+). Its function is as follows. Essential peptidyl-tRNA hydrolase component of the mitochondrial large ribosomal subunit. Acts as a codon-independent translation release factor that has lost all stop codon specificity and directs the termination of translation in mitochondrion, possibly in case of abortive elongation. May be involved in the hydrolysis of peptidyl-tRNAs that have been prematurely terminated and thus in the recycling of stalled mitochondrial ribosomes. The chain is Large ribosomal subunit protein mL62 from Mus musculus (Mouse).